The primary structure comprises 667 residues: Probable sulfate permease C320.05 (667 aa).

A disordered region spans residues 1 to 27 (MSSPSENHLLGPKTSFIDNRTSTSRPL). Polar residues predominate over residues 16–25 (FIDNRTSTSR). Transmembrane regions (helical) follow at residues 77–97 (IIWD…IALS), 102–122 (FLGV…ILYC), 162–182 (ILVT…AGLF), 198–218 (GCIL…FFGF), 240–260 (MSKA…LLIG), 275–295 (IVSI…SKKF), 301–321 (YGIA…LPLP), 336–356 (GVMC…AISL), 368–388 (LISL…PICG), 405–425 (VATI…MPVF), 433–453 (LASM…VEIF), and 465–485 (GIIF…GIIF). Residues 532-657 (SSTAVESAPR…DHVQDSIKKV (126 aa)) enclose the STAS domain.

The protein belongs to the SLC26A/SulP transporter (TC 2.A.53) family.

It localises to the endoplasmic reticulum membrane. In terms of biological role, possible sulfate transporter. The chain is Probable sulfate permease C320.05 from Schizosaccharomyces pombe (strain 972 / ATCC 24843) (Fission yeast).